A 323-amino-acid polypeptide reads, in one-letter code: CIMIP2 protein CG18335 (323 aa).

It belongs to the CIMIP2 family.

The protein localises to the cytoplasm. Its subcellular location is the cytoskeleton. The protein resides in the cilium axoneme. Its function is as follows. Probable microtubule inner protein (MIP) part of the dynein-decorated doublet microtubules (DMTs) in cilium axoneme. This chain is CIMIP2 protein CG18335, found in Drosophila melanogaster (Fruit fly).